A 707-amino-acid chain; its full sequence is DNA topoisomerase 1 (707 aa).

The Toprim domain occupies 1–140 (MYAILAEKPS…IKRLWTSSMT (140 aa)). One can recognise a Topo IA-type catalytic domain in the interval 157 to 596 (TLPLYYQAKA…HSKKLSSVLF (440 aa)). The interval 199–204 (SLGRVQ) is interaction with DNA. The active-site O-(5'-phospho-DNA)-tyrosine intermediate is Tyr-323.

This sequence belongs to the type IA topoisomerase family. Monomer.

The catalysed reaction is ATP-independent breakage of single-stranded DNA, followed by passage and rejoining.. Its function is as follows. Releases the supercoiling and torsional tension of DNA, which is introduced during the DNA replication and transcription, by transiently cleaving and rejoining one strand of the DNA duplex. Introduces a single-strand break via transesterification at a target site in duplex DNA. The scissile phosphodiester is attacked by the catalytic tyrosine of the enzyme, resulting in the formation of a DNA-(5'-phosphotyrosyl)-enzyme intermediate and the expulsion of a 3'-OH DNA strand. The free DNA strand then undergoes passage around the unbroken strand, thus removing DNA supercoils. Finally, in the religation step, the DNA 3'-OH attacks the covalent intermediate to expel the active-site tyrosine and restore the DNA phosphodiester backbone. The chain is DNA topoisomerase 1 (topA) from Alkalihalophilus pseudofirmus (strain ATCC BAA-2126 / JCM 17055 / OF4) (Bacillus pseudofirmus).